The sequence spans 348 residues: Quinolinate synthase (348 aa).

Iminosuccinate-binding residues include H47 and S68. Position 113 (C113) interacts with [4Fe-4S] cluster. Residues 139–141 (YAN) and S156 contribute to the iminosuccinate site. C200 serves as a coordination point for [4Fe-4S] cluster. Iminosuccinate contacts are provided by residues 226–228 (HPE) and T243. [4Fe-4S] cluster is bound at residue C297.

Belongs to the quinolinate synthase family. Type 1 subfamily. The cofactor is [4Fe-4S] cluster.

It localises to the cytoplasm. It carries out the reaction iminosuccinate + dihydroxyacetone phosphate = quinolinate + phosphate + 2 H2O + H(+). It functions in the pathway cofactor biosynthesis; NAD(+) biosynthesis; quinolinate from iminoaspartate: step 1/1. Functionally, catalyzes the condensation of iminoaspartate with dihydroxyacetone phosphate to form quinolinate. In Sodalis glossinidius (strain morsitans), this protein is Quinolinate synthase.